The chain runs to 2198 residues: Activating signal cointegrator 1 complex subunit 3 (2198 aa).

S12 carries the post-translational modification Phosphoserine. 2 coiled-coil regions span residues 18–81 (KQDN…KQIV) and 328–356 (IQSE…KAGE). Residues 487-670 (ETAYNTNENM…FLHVNPYIGL (184 aa)) form the Helicase ATP-binding 1 domain. Residue 500–507 (APTGAGKT) coordinates ATP. At K573 the chain carries N6-acetyllysine. A DEVH box motif is present at residues 612–615 (DEVH). The Helicase C-terminal 1 domain occupies 697 to 915 (QLNNMDEVCY…GTVTNVEEAV (219 aa)). The region spanning 979 to 1288 (STDLGRTASH…GAEAVCIINF (310 aa)) is the SEC63 1 domain. A Helicase ATP-binding 2 domain is found at 1337–1512 (HTLYHTDCNV…WLNIKQMGLF (176 aa)). 1350–1357 (APTGSGKT) contributes to the ATP binding site. The DEIH box motif lies at 1454–1457 (DEIH). The 196-residue stretch at 1545-1740 (PAFQAIRSHS…VLSDHLNAEI (196 aa)) folds into the Helicase C-terminal 2 domain. The SEC63 2 domain maps to 1813–2177 (PLTCGRIASY…LGLDQQYDIY (365 aa)).

This sequence belongs to the helicase family. Identified in the ASCC complex that contains ASCC1, ASCC2 and ASCC3. Functions as a scaffolding subunit that interacts directly with both ASCC1 and ASCC2. Interacts directly with ALKBH3, and thereby recruits ALKBH3 to the ASCC complex. Part of the ASC-1/TRIP4 complex, that contains TRIP4, ASCC1, ASCC2 and ASCC3. Part of the RQT (ribosome quality control trigger) complex, that contains ASCC2, ASCC3 and TRIP4. Associates with ribosomes; recruited to collided ribosomes. Interacts with ZCCHC4. Interacts with ZNF598. Interacts with RPS3.

It localises to the nucleus. The protein resides in the nucleus speckle. It is found in the cytoplasm. The protein localises to the cytosol. It carries out the reaction Couples ATP hydrolysis with the unwinding of duplex DNA by translocating in the 3'-5' direction.. The enzyme catalyses ATP + H2O = ADP + phosphate + H(+). In terms of biological role, ATPase involved both in DNA repair and rescue of stalled ribosomes. 3'-5' DNA helicase involved in repair of alkylated DNA: promotes DNA unwinding to generate single-stranded substrate needed for ALKBH3, enabling ALKBH3 to process alkylated N3-methylcytosine (3mC) within double-stranded regions. Also involved in activation of the ribosome quality control (RQC) pathway, a pathway that degrades nascent peptide chains during problematic translation. Drives the splitting of stalled ribosomes that are ubiquitinated in a ZNF598-dependent manner, as part of the ribosome quality control trigger (RQT) complex. Part of the ASC-1 complex that enhances NF-kappa-B, SRF and AP1 transactivation. The polypeptide is Activating signal cointegrator 1 complex subunit 3 (Ascc3) (Mus musculus (Mouse)).